Consider the following 440-residue polypeptide: Transposon Ty1-ML1 Gag polyprotein (440 aa).

3 stretches are compositionally biased toward polar residues: residues 1-23 (MESQ…SVTS), 48-60 (TKAN…TPAS), and 127-152 (QSQF…GNTF). Disordered regions lie at residues 1–88 (MESQ…YPQQ), 126–173 (PQSQ…RPPP), and 352–440 (GSRN…PETY). A compositionally biased stretch (low complexity) spans 153 to 165 (TDSSSADSDMTST). An RNA-binding region spans residues 299–401 (NNGIHINNKV…NSKSKTARAH (103 aa)). Low complexity predominate over residues 402–418 (NVSTSNNSPSTDNDSIS). Ser-416 bears the Phosphoserine mark. The segment covering 419–428 (KSTTEPIQLN) has biased composition (polar residues). Over residues 429–440 (NKHDLHLRPETY) the composition is skewed to basic and acidic residues.

In terms of assembly, homotrimer.

It is found in the cytoplasm. Capsid protein (CA) is the structural component of the virus-like particle (VLP), forming the shell that encapsulates the retrotransposons dimeric RNA genome. The particles are assembled from trimer-clustered units and there are holes in the capsid shells that allow for the diffusion of macromolecules. CA also has nucleocapsid-like chaperone activity, promoting primer tRNA(i)-Met annealing to the multipartite primer-binding site (PBS), dimerization of Ty1 RNA and initiation of reverse transcription. The chain is Transposon Ty1-ML1 Gag polyprotein (TY1A-ML1) from Saccharomyces cerevisiae (strain ATCC 204508 / S288c) (Baker's yeast).